The following is a 350-amino-acid chain: tRNA uridine(34) hydroxylase (350 aa).

In terms of domain architecture, Rhodanese spans 146 to 240 (DDPDAVFIDM…YARRARAQGL (95 aa)). Residue Cys-200 is the Cysteine persulfide intermediate of the active site. Positions 319-328 (RRRRAGRENG) are enriched in basic and acidic residues. A disordered region spans residues 319 to 350 (RRRRAGRENGNKIFNKSRGRLNSKLSIPDPAE).

It belongs to the TrhO family.

It carries out the reaction uridine(34) in tRNA + AH2 + O2 = 5-hydroxyuridine(34) in tRNA + A + H2O. Catalyzes oxygen-dependent 5-hydroxyuridine (ho5U) modification at position 34 in tRNAs. This is tRNA uridine(34) hydroxylase from Salmonella newport (strain SL254).